The sequence spans 451 residues: Signal transduction histidine-protein kinase ArlS (451 aa).

A run of 2 helical transmembrane segments spans residues 11–31 and 156–176; these read IIVT…IIIF and IIAL…SYVF. One can recognise an HAMP domain in the interval 178–231; it reads TQITKPLVSLSNKMIEIRRDGFQNKLQLNTNYEEIDNLANTFNEMMSQIEESFN. A Histidine kinase domain is found at 239 to 451; the sequence is DASHELRTPL…NKGTTFKIIF (213 aa). Position 242 is a phosphohistidine; by autocatalysis (His-242).

Autophosphorylated.

Its subcellular location is the cell membrane. The enzyme catalyses ATP + protein L-histidine = ADP + protein N-phospho-L-histidine.. Its function is as follows. Member of the two-component regulatory system ArlS/ArlR involved in the regulation of adhesion, autolysis, multidrug resistance and virulence. ArlS probably functions as a sensor protein kinase which is autophosphorylated at a histidine residue and transfers its phosphate group to ArlR. The sequence is that of Signal transduction histidine-protein kinase ArlS (arlS) from Staphylococcus aureus (strain bovine RF122 / ET3-1).